Reading from the N-terminus, the 182-residue chain is Molybdopterin synthase catalytic subunit (182 aa).

Residues 119–120 (HR), Lys-135, and 142–144 (KRE) contribute to the substrate site. Positions 152 to 182 (VWRANRDGAPGQRIDTAEPAVGAGSGGEIDD) are disordered.

It belongs to the MoaE family. MOCS2B subfamily. Heterotetramer; composed of 2 small (MOCS2A) and 2 large (MOCS2B) subunits.

Its subcellular location is the cytoplasm. The enzyme catalyses 2 [molybdopterin-synthase sulfur-carrier protein]-C-terminal-Gly-aminoethanethioate + cyclic pyranopterin phosphate + H2O = molybdopterin + 2 [molybdopterin-synthase sulfur-carrier protein]-C-terminal Gly-Gly + 2 H(+). It functions in the pathway cofactor biosynthesis; molybdopterin biosynthesis. Functionally, catalytic subunit of the molybdopterin synthase complex, a complex that catalyzes the conversion of precursor Z into molybdopterin. Acts by mediating the incorporation of 2 sulfur atoms from thiocarboxylated MOCS2A into precursor Z to generate a dithiolene group. This chain is Molybdopterin synthase catalytic subunit, found in Pyricularia oryzae (strain 70-15 / ATCC MYA-4617 / FGSC 8958) (Rice blast fungus).